A 206-amino-acid polypeptide reads, in one-letter code: Flavin prenyltransferase UbiX (206 aa).

FMN is bound by residues 11–13, S37, 103–106, and R138; these read GAS and SMST. Residues Y168 and R184 each contribute to the dimethylallyl phosphate site.

The protein belongs to the UbiX/PAD1 family.

It carries out the reaction dimethylallyl phosphate + FMNH2 = prenylated FMNH2 + phosphate. Its function is as follows. Flavin prenyltransferase that catalyzes the synthesis of the prenylated FMN cofactor (prenyl-FMN) for 4-hydroxy-3-polyprenylbenzoic acid decarboxylase UbiD. The prenyltransferase is metal-independent and links a dimethylallyl moiety from dimethylallyl monophosphate (DMAP) to the flavin N5 and C6 atoms of FMN. The protein is Flavin prenyltransferase UbiX of Synechocystis sp. (strain ATCC 27184 / PCC 6803 / Kazusa).